The primary structure comprises 285 residues: Dihydropteroate synthase (285 aa).

Residues 25-271 (TLVMGILNVT…DVKQIARMAK (247 aa)) form the Pterin-binding domain. Asn32 contributes to the Mg(2+) binding site. (7,8-dihydropterin-6-yl)methyl diphosphate is bound by residues Thr72, Asp106, Asn125, Asp189, Lys225, and 259 to 261 (RVH).

It belongs to the DHPS family. It depends on Mg(2+) as a cofactor.

It catalyses the reaction (7,8-dihydropterin-6-yl)methyl diphosphate + 4-aminobenzoate = 7,8-dihydropteroate + diphosphate. It participates in cofactor biosynthesis; tetrahydrofolate biosynthesis; 7,8-dihydrofolate from 2-amino-4-hydroxy-6-hydroxymethyl-7,8-dihydropteridine diphosphate and 4-aminobenzoate: step 1/2. In terms of biological role, catalyzes the condensation of para-aminobenzoate (pABA) with 6-hydroxymethyl-7,8-dihydropterin diphosphate (DHPt-PP) to form 7,8-dihydropteroate (H2Pte), the immediate precursor of folate derivatives. This Bacillus subtilis (strain 168) protein is Dihydropteroate synthase (sul).